Reading from the N-terminus, the 400-residue chain is Acetate kinase (400 aa).

A Mg(2+)-binding site is contributed by N10. Residue K17 coordinates ATP. R91 provides a ligand contact to substrate. The active-site Proton donor/acceptor is the D150. ATP is bound by residues 210–214 (HLGNG), 285–287 (DCR), and 333–337 (GIGEN). E387 provides a ligand contact to Mg(2+).

Belongs to the acetokinase family. In terms of assembly, homodimer. Mg(2+) serves as cofactor. Requires Mn(2+) as cofactor.

The protein localises to the cytoplasm. The catalysed reaction is acetate + ATP = acetyl phosphate + ADP. It participates in metabolic intermediate biosynthesis; acetyl-CoA biosynthesis; acetyl-CoA from acetate: step 1/2. In terms of biological role, catalyzes the formation of acetyl phosphate from acetate and ATP. Can also catalyze the reverse reaction. This is Acetate kinase from Pectobacterium carotovorum subsp. carotovorum (strain PC1).